A 179-amino-acid polypeptide reads, in one-letter code: Probable chorismate pyruvate-lyase (179 aa).

Substrate-binding residues include Arg82, Leu120, and Glu165.

This sequence belongs to the UbiC family.

It localises to the cytoplasm. The catalysed reaction is chorismate = 4-hydroxybenzoate + pyruvate. It participates in cofactor biosynthesis; ubiquinone biosynthesis. In terms of biological role, removes the pyruvyl group from chorismate, with concomitant aromatization of the ring, to provide 4-hydroxybenzoate (4HB) for the ubiquinone pathway. This chain is Probable chorismate pyruvate-lyase, found in Vibrio parahaemolyticus serotype O3:K6 (strain RIMD 2210633).